A 111-amino-acid chain; its full sequence is Cytochrome c (111 aa).

Ala-1 carries the N-acetylalanine modification. 3 residues coordinate heme c: Cys-22, Cys-25, and His-26. Lys-80 bears the N6,N6,N6-trimethyllysine mark. Heme c is bound at residue Met-88. Lys-94 bears the N6,N6,N6-trimethyllysine mark.

The protein belongs to the cytochrome c family. In terms of processing, binds 1 heme c group covalently per subunit.

It is found in the mitochondrion intermembrane space. Functionally, electron carrier protein. The oxidized form of the cytochrome c heme group can accept an electron from the heme group of the cytochrome c1 subunit of cytochrome reductase. Cytochrome c then transfers this electron to the cytochrome oxidase complex, the final protein carrier in the mitochondrial electron-transport chain. This Guizotia abyssinica (Niger) protein is Cytochrome c.